A 372-amino-acid polypeptide reads, in one-letter code: Histidinol-phosphate aminotransferase (372 aa).

Residue Lys-229 is modified to N6-(pyridoxal phosphate)lysine.

It belongs to the class-II pyridoxal-phosphate-dependent aminotransferase family. Histidinol-phosphate aminotransferase subfamily. In terms of assembly, homodimer. Pyridoxal 5'-phosphate is required as a cofactor.

It carries out the reaction L-histidinol phosphate + 2-oxoglutarate = 3-(imidazol-4-yl)-2-oxopropyl phosphate + L-glutamate. It functions in the pathway amino-acid biosynthesis; L-histidine biosynthesis; L-histidine from 5-phospho-alpha-D-ribose 1-diphosphate: step 7/9. The chain is Histidinol-phosphate aminotransferase from Bdellovibrio bacteriovorus (strain ATCC 15356 / DSM 50701 / NCIMB 9529 / HD100).